The chain runs to 288 residues: T-cell-interacting, activating receptor on myeloid cells protein 1 (288 aa).

Residues 1–16 (MISRLLSLLCLRLCVG) form the signal peptide. Topologically, residues 17-258 (QTDIPENGSP…EGYTVDNLIR (242 aa)) are extracellular. 2 Ig-like C2-type domains span residues 27 to 113 (PKPS…HPSN) and 124 to 217 (PQPS…LEIS). 2 cysteine pairs are disulfide-bonded: cysteine 49-cysteine 97 and cysteine 146-cysteine 196. N-linked (GlcNAc...) asparagine glycans are attached at residues asparagine 74 and asparagine 185. A helical membrane pass occupies residues 259–279 (VGVAAAILLIVGGFLVEAWHS). The Cytoplasmic portion of the chain corresponds to 280–288 (ERLSPNKPW).

In terms of assembly, interacts with Fc receptor gamma chain FCER1G. N-glycosylated. As to expression, expressed in lung, uterus, lymph nodes, spleen, thymus and bone marrow. Expressed in bone marrow CD11b(+)Gr-1(+) granulocyte precursors and mature neutrophils.

It is found in the cell membrane. Functionally, may act as receptor. Negatively regulates TCR-mediated CD4(+) T cell proliferation and activation, possibly by binding an unknown ligand on the T cell surface. Enhances Toll-like receptor-mediated production of pro-inflammatory cytokines by macrophages and neutrophils. In Mus musculus (Mouse), this protein is T-cell-interacting, activating receptor on myeloid cells protein 1 (Tarm1).